Here is a 204-residue protein sequence, read N- to C-terminus: Recombination protein RecR (204 aa).

A C4-type zinc finger spans residues 61 to 76; sequence CARCNTFSETQICSTC. The 100-residue stretch at 84 to 183 folds into the Toprim domain; sequence SLLCIVETPA…KVTRIARGIP (100 aa).

This sequence belongs to the RecR family.

Functionally, may play a role in DNA repair. It seems to be involved in an RecBC-independent recombinational process of DNA repair. It may act with RecF and RecO. The protein is Recombination protein RecR of Polynucleobacter asymbioticus (strain DSM 18221 / CIP 109841 / QLW-P1DMWA-1) (Polynucleobacter necessarius subsp. asymbioticus).